We begin with the raw amino-acid sequence, 97 residues long: Phosphoribosyl-ATP pyrophosphatase (97 aa).

It belongs to the PRA-PH family.

The protein localises to the cytoplasm. It catalyses the reaction 1-(5-phospho-beta-D-ribosyl)-ATP + H2O = 1-(5-phospho-beta-D-ribosyl)-5'-AMP + diphosphate + H(+). The protein operates within amino-acid biosynthesis; L-histidine biosynthesis; L-histidine from 5-phospho-alpha-D-ribose 1-diphosphate: step 2/9. The protein is Phosphoribosyl-ATP pyrophosphatase of Methanoculleus marisnigri (strain ATCC 35101 / DSM 1498 / JR1).